We begin with the raw amino-acid sequence, 296 residues long: Mitochondrial arginine transporter BAC2 (296 aa).

3 Solcar repeats span residues 13–93, 104–187, and 198–282; these read GREF…FSRS, PSYR…VRER, and ENLR…ALRC. Transmembrane regions (helical) follow at residues 16-36, 70-90, 110-130, 162-181, 204-224, and 260-280; these read FVAG…LDTL, AAPL…YAIF, ALGG…VELI, GLTI…FWTY, LVAG…LDVV, and TAVA…EVAL.

The protein belongs to the mitochondrial carrier (TC 2.A.29) family. In terms of tissue distribution, high expression in flowers, stamens, petals and pollen. Expressed in roots, leaves and stems.

It is found in the mitochondrion inner membrane. Its activity is regulated as follows. Inhibited by mercuric chloride. Functionally, mitochondrial arginine transporter that catalyzes the counter-exchange of arginine with lysine, ornithine, arginine, histidine and citrulline. Substrate preference in reconstituted proteoliposomes is arginine &gt; homoarginine &gt; citrulline &gt; histidine &gt; lysine &gt; ornithine. May be involved in the delivery of arginine, released from seed reserves, to mitochondrial arginase and the export of ornithine. May contribute to proline accumulation in response to hyperosmotic stress. The sequence is that of Mitochondrial arginine transporter BAC2 (BAC2) from Arabidopsis thaliana (Mouse-ear cress).